Here is a 414-residue protein sequence, read N- to C-terminus: MHSRGREIVVLLNPWSINEAVSSYCTYFIKQDSKSFGIMVSWKGIYFILTLFWGSFFGSIFMLSPFLPLMFVNPSWYRWINNRLVATWLTLPVALLETMFGVKVIITGDAFVPGERSVIIMNHRTRMDWMFLWNCLMRYSYLRLEKICLKASLKGVPGFGWAMQAAAYIFIHRKWKDDKSHFEDMIDYFCDIHEPLQLLIFPEGTDLTENSKSRSNAFAEKNGLQKYEYVLHPRTTGFTFVVDRLREGKNLDAVHDITVAYPHNIPQSEKHLLQGDFPREIHFHVHRYPIDTLPTSKEDLQLWCHKRWEEKEERLRSFYQGEKNFYFTGQSVIPPCKSELRVLVVKLLSILYWTLFSPAMCLLIYLYSLVKWYFIITIVIFVLQERIFGGLEIIELACYRLLHKQPHLNSKKNE.

Helical transmembrane passes span 47–67 and 86–106; these read FILT…SPFL and ATWL…KVII. Residues 123-128 carry the HXXXXD motif motif; that stretch reads HRTRMD. Lys-221 carries the post-translational modification N6-acetyllysine. The next 2 helical transmembrane spans lie at 340-360 and 362-382; these read LRVL…SPAM and LLIY…VIFV.

The protein belongs to the 1-acyl-sn-glycerol-3-phosphate acyltransferase family. In terms of tissue distribution, expressed at higher level in heart, kidney and pancreas than in brain, spleen, liver, lung, small intestine and placenta.

The protein localises to the endoplasmic reticulum membrane. It catalyses the reaction a 1-acyl-sn-glycero-3-phosphate + an acyl-CoA = a 1,2-diacyl-sn-glycero-3-phosphate + CoA. It carries out the reaction a 1-acyl-sn-glycero-3-phospho-(1D-myo-inositol) + an acyl-CoA = a 1,2-diacyl-sn-glycero-3-phospho-(1D-myo-inositol) + CoA. The catalysed reaction is 1-acyl-sn-glycero-3-phospho-(1'-sn-glycerol) + an acyl-CoA = a 1,2-diacyl-sn-glycero-3-phospho-(1'-sn-glycerol) + CoA. The enzyme catalyses 1-hexadecanoyl-sn-glycero-3-phosphate + (9Z)-octadecenoyl-CoA = 1-hexadecanoyl-2-(9Z-octadecenoyl)-sn-glycero-3-phosphate + CoA. It catalyses the reaction 1-(9Z-octadecenoyl)-sn-glycero-3-phosphate + (9Z)-octadecenoyl-CoA = 1,2-di-(9Z-octadecenoyl)-sn-glycero-3-phosphate + CoA. It carries out the reaction 1-(9Z,12Z)-octadecadienoyl-sn-glycero-3-phosphate + (9Z)-octadecenoyl-CoA = 1-(9Z,12Z)-octadecadienoyl-2-(9Z)-octadecenoyl-sn-glycero-3-phosphate + CoA. The catalysed reaction is 1-(9Z,12Z,15Z)-octadecatrienoyl-sn-glycero-3-phosphate + (9Z)-octadecenoyl-CoA = 1-(9Z,12Z,15Z)-octadecatrienoyl-2-(9Z)-octadecenoyl-sn-glycero-3-phosphate + CoA. The enzyme catalyses 1-(9Z-octadecenoyl)-sn-glycero-3-phosphate + hexadecanoyl-CoA = 1-(9Z)-octadecenoyl-2-hexadecanoyl-sn-glycero-3-phosphate + CoA. It catalyses the reaction 1-(9Z-octadecenoyl)-sn-glycero-3-phosphate + octadecanoyl-CoA = 1-(9Z-octadecenoyl)-2-octadecanoyl-sn-glycero-3-phosphate + CoA. It carries out the reaction 1-acyl-sn-glycero-3-phospho-(1'-sn-glycerol) + (9Z)-octadecenoyl-CoA = 1-acyl-2-(9Z-octadecenoyl)-sn-glycero-3-phospho-(1'-sn-glycerol) + CoA. The catalysed reaction is a 1-acyl-sn-glycero-3-phospho-(1D-myo-inositol) + (9Z)-octadecenoyl-CoA = a 1-acyl-2-(9Z-octadecenoyl)-sn-glycero-3-phospho-(1D-myo-inositol) + CoA. The enzyme catalyses 1-hexadecanoyl-sn-glycero-3-phospho-(1D-myo-inositol) + hexadecanoyl-CoA = 1,2-dihexadecanoyl-sn-glycero-3-phospho-(1D-myo-inositol) + CoA. It catalyses the reaction 1-hexadecanoyl-sn-glycero-3-phospho-(1D-myo-inositol) + octadecanoyl-CoA = 1-hexadecanoyl-2-octadecanoyl-sn-glycero-3-phospho-(1D-myo-inositol) + CoA. It carries out the reaction 1-hexadecanoyl-sn-glycero-3-phospho-(1D-myo-inositol) + (9Z)-octadecenoyl-CoA = 1-hexadecanoyl-2-(9Z-octadecenoyl)-sn-glycero-3-phospho-(1D-myo-inositol) + CoA. The catalysed reaction is 1-hexadecanoyl-sn-glycero-3-phospho-(1D-myo-inositol) + (9Z,12Z)-octadecadienoyl-CoA = 1-hexadecanoyl-2-(9Z,12Z-octadecadienoyl)-sn-glycero-3-phospho-(1D-myo-inositol) + CoA. The enzyme catalyses 1-hexadecanoyl-sn-glycero-3-phospho-(1D-myo-inositol) + (5Z,8Z,11Z,14Z)-eicosatetraenoyl-CoA = 1-hexadecanoyl-2-(5Z,8Z,11Z,14Z-eicosatetraenoyl)-sn-glycero-3-phospho-D-myo-inositol + CoA. It catalyses the reaction 1-hexadecanoyl-sn-glycero-3-phospho-(1'-sn-glycerol) + hexadecanoyl-CoA = 1,2-dihexadecanoyl-sn-glycero-3-phospho-(1'-sn-glycerol) + CoA. It carries out the reaction 1-hexadecanoyl-sn-glycero-3-phospho-(1'-sn-glycerol) + octadecanoyl-CoA = 1-hexadecanoyl-2-octadecanoyl-sn-glycero-3-phospho-(1'-sn-glycerol) + CoA. The catalysed reaction is 1-hexadecanoyl-sn-glycero-3-phospho-(1'-sn-glycerol) + (9Z)-octadecenoyl-CoA = 1-hexadecanoyl-2-(9Z-octadecenoyl)-sn-glycero-3-phospho-(1'-sn-glycerol) + CoA. The enzyme catalyses 1-hexadecanoyl-sn-glycero-3-phospho-(1'-sn-glycerol) + (9Z,12Z)-octadecadienoyl-CoA = 1-hexadecanoyl-2-(9Z,12Z-octadecadienoyl)-sn-glycero-3-phospho-(1'-sn-glycerol) + CoA. It catalyses the reaction 1-tetradecanoyl-sn-glycero-3-phospho-(1'-sn-glycerol) + (9Z)-octadecenoyl-CoA = 1-tetradecanoyl-2-(9Z-octadecenoyl)-sn-glycero-3-phospho-(1'-sn-glycerol) + CoA. It carries out the reaction 1-octadecanoyl-sn-glycero-3-phospho-(1'-sn-glycerol) + (9Z)-octadecenoyl-CoA = 1-octadecanoyl-2-(9Z-octadecenoyl)-sn-glycero-3-phospho-(1'-sn-glycerol) + CoA. The catalysed reaction is 1-(9Z-octadecenoyl)-sn-glycero-3-phospho-(1'-sn-glycerol) + (9Z)-octadecenoyl-CoA = 1,2-di-(9Z-octadecenoyl)-sn-glycero-3-phospho-(1'-sn-glycerol) + CoA. The enzyme catalyses 1-hexadecanoyl-sn-glycero-3-phospho-(1D-myo-inositol) + dodecanoyl-CoA = 1-hexadecanoyl-2-dodecanoyl-sn-glycero-3-phospho-(1D-myo-inositol) + CoA. It catalyses the reaction 1',3'-bis-[1-acyl-sn-glycero-3-phospho]-glycerol + (9Z)-octadecenoyl-CoA = 1'-[1-acyl-2-(9Z)-octadecenoyl-sn-glycero-3-phospho],3'-[1-acyl,2-hydroxy-sn-glycero-3-phospho]-glycerol + CoA. It carries out the reaction 1'-[1,2-diacyl-sn-glycero-3-phospho],3'-[1-acyl-sn-glycero-3-phospho]-glycerol + (9Z)-octadecenoyl-CoA = 1'-[1,2-diacyl-sn-glycero-3-phospho],3'-[1-acyl,2-(9Z)-octadecenoyl-sn-glycero-3-phospho]-glycerol + CoA. The catalysed reaction is 1'-[1,2-diacyl-sn-glycero-3-phospho],3'-[1-acyl-sn-glycero-3-phospho]-glycerol + (9Z,12Z)-octadecadienoyl-CoA = 1'-[1,2-diacyl-sn-glycero-3-phospho],3'-[1-acyl,2-(9Z,12Z)-octadecadienoyl-sn-glycero-3-phospho]-glycerol + CoA. The enzyme catalyses 1'-[1,2-diacyl-sn-glycero-3-phospho],3'-[1-acyl-sn-glycero-3-phospho]-glycerol + dodecanoyl-CoA = 1'-[1,2-diacyl-sn-glycero-3-phospho],3'-[1-acyl,2-dodecanoyl-sn-glycero-3-phospho]-glycerol + CoA. It catalyses the reaction 1',3'-bis-[1-acyl-sn-glycero-3-phospho]-glycerol + dodecanoyl-CoA = 1'-[1-acyl-2-dodecanoyl-sn-glycero-3-phospho],3'-[1-acyl,2-hydroxy-sn-glycero-3-phospho]-glycerol + CoA. It carries out the reaction a 1-acyl-sn-glycero-3-phosphate + (9Z)-octadecenoyl-CoA = a 1-acyl-2-(9Z-octadecenoyl)-sn-glycero-3-phosphate + CoA. The catalysed reaction is 1',3'-bis-[1-acyl-sn-glycero-3-phospho]-glycerol + (9Z,12Z)-octadecadienoyl-CoA = 1'-[1-acyl-2-(9Z,12Z)-octadecadienoyl-sn-glycero-3-phospho],3'-[1-acyl,2-hydroxy-sn-glycero-3-phospho]-glycerol + CoA. The enzyme catalyses 1',3'-bis-[1-acyl-sn-glycero-3-phospho]-glycerol + hexadecanoyl-CoA = 1'-[1-acyl-2-hexadecanoyl-sn-glycero-3-phospho],3'-[1-acyl,2-hydroxy-sn-glycero-3-phospho]-glycerol + CoA. It catalyses the reaction 1',3'-bis-[1-acyl-sn-glycero-3-phospho]-glycerol + octadecanoyl-CoA = 1'-[1-acyl-2-octadecanoyl-sn-glycero-3-phospho],3'-[1-acyl,2-hydroxy-sn-glycero-3-phospho]-glycerol + CoA. It carries out the reaction 1'-[1,2-diacyl-sn-glycero-3-phospho],3'-[1-acyl-sn-glycero-3-phospho]-glycerol + octanoyl-CoA = 1'-[1,2-diacyl-sn-glycero-3-phospho],3'-[1-acyl,2-octanoyl-sn-glycero-3-phospho]-glycerol + CoA. The catalysed reaction is 1',3'-bis-[1-acyl-sn-glycero-3-phospho]-glycerol + octanoyl-CoA = 1'-[1-acyl-2-octanoyl-sn-glycero-3-phospho],3'-[1-acyl,2-hydroxy-sn-glycero-3-phospho]-glycerol + CoA. The enzyme catalyses 1'-[1,2-diacyl-sn-glycero-3-phospho],3'-[1-acyl-sn-glycero-3-phospho]-glycerol + hexadecanoyl-CoA = 1'-[1,2-diacyl-sn-glycero-3-phospho],3'-[1-acyl,2-hexadecanoyl-sn-glycero-3-phospho]-glycerol + CoA. It catalyses the reaction 1'-[1,2-diacyl-sn-glycero-3-phospho],3'-[1-acyl-sn-glycero-3-phospho]-glycerol + (5Z,8Z,11Z,14Z)-eicosatetraenoyl-CoA = 1'-[1,2-diacyl-sn-glycero-3-phospho],3'-[1-acyl,2-(5Z,8Z,11Z,14Z)-eicosatetraenoyl-sn-glycero-3-phospho]-glycerol + CoA. It carries out the reaction 1',3'-bis-[1-acyl-sn-glycero-3-phospho]-glycerol + (5Z,8Z,11Z,14Z)-eicosatetraenoyl-CoA = 1'-[1-acyl-2-(5Z,8Z,11Z,14Z)-eicosatetraenoyl-sn-glycero-3-phospho],3'-[1-acyl,2-hydroxy-sn-glycero-3-phospho]-glycerol + CoA. The catalysed reaction is a 1-acyl-sn-glycero-3-phospho-(1D-myo-inositol) + octadecanoyl-CoA = a 1-acyl-2-octadecanoyl-sn-glycero-3-phospho-(1D-myo-inositol) + CoA. The enzyme catalyses a 2-acyl-sn-glycero-3-phospho-D-myo-inositol + octadecanoyl-CoA = 1-octadecanoyl-2-acyl-sn-glycero-3-phospho-1D-myo-inositol + CoA. It functions in the pathway phospholipid metabolism; CDP-diacylglycerol biosynthesis; CDP-diacylglycerol from sn-glycerol 3-phosphate: step 2/3. Functionally, exhibits acyl-CoA:lysocardiolipin acyltransferase (ALCAT) activity; catalyzes the reacylation of lyso-cardiolipin to cardiolipin (CL), a key step in CL remodeling. Recognizes both monolysocardiolipin and dilysocardiolipin as substrates with a preference for linoleoyl-CoA and oleoyl-CoA as acyl donors. Also exhibits 1-acyl-sn-glycerol-3-phosphate acyltransferase activity (AGPAT) activity; converts 1-acyl-sn-glycerol-3- phosphate (lysophosphatidic acid or LPA) into 1,2-diacyl-sn-glycerol-3- phosphate (phosphatidic acid or PA) by incorporating an acyl moiety at the sn-2 position of the glycerol backbone. Possesses both lysophosphatidylinositol acyltransferase (LPIAT) and lysophosphatidylglycerol acyltransferase (LPGAT) activities. Required for establishment of the hematopoietic and endothelial lineages. The protein is Lysocardiolipin acyltransferase 1 (LCLAT1) of Homo sapiens (Human).